Here is a 56-residue protein sequence, read N- to C-terminus: Serine protease inhibitor Kazal-type 1 (56 aa).

The region spanning 3-56 is the Kazal-like domain; sequence LGREAKCNNNAGGCTKIYNPVCGTDGNTYPNECMLCVENQKRQMPVLIQRSGPC. Cystine bridges form between Cys-9–Cys-38, Cys-16–Cys-35, and Cys-24–Cys-56.

The protein resides in the secreted. Serine protease inhibitor which exhibits anti-trypsin activity. In the pancreas, protects against trypsin-catalyzed premature activation of zymogens. Functionally, in the male reproductive tract, binds to sperm heads where it modulates sperm capacitance by inhibiting calcium uptake and nitrogen oxide (NO) production. This chain is Serine protease inhibitor Kazal-type 1 (SPINK1), found in Equus caballus (Horse).